Consider the following 666-residue polypeptide: Fructose-1,6-bisphosphatase class 3 (666 aa).

It belongs to the FBPase class 3 family. The cofactor is Mn(2+).

It catalyses the reaction beta-D-fructose 1,6-bisphosphate + H2O = beta-D-fructose 6-phosphate + phosphate. The protein operates within carbohydrate biosynthesis; gluconeogenesis. This is Fructose-1,6-bisphosphatase class 3 from Phocaeicola vulgatus (strain ATCC 8482 / DSM 1447 / JCM 5826 / CCUG 4940 / NBRC 14291 / NCTC 11154) (Bacteroides vulgatus).